Reading from the N-terminus, the 420-residue chain is Protein BDLF2 (420 aa).

Disordered stretches follow at residues 1–21 (MVDEQVAVEHGTVSHTISREE) and 64–129 (AAAV…GGQR). Topologically, residues 1-184 (MVDEQVAVEH…AETLAEPPRC (184 aa)) are intravirion. Residues 90 to 108 (TKTNTQDQNQNQTTRTRTN) are compositionally biased toward low complexity. The chain crosses the membrane as a helical; Signal-anchor for type II membrane protein span at residues 185–205 (FMLSFVFIYYCCYLAFLALLA). The Virion surface segment spans residues 206–420 (FGFNPLFLPS…LEEVMYVMVQ (215 aa)). N258, N264, N300, N304, N371, and N384 each carry an N-linked (GlcNAc...) asparagine; by host glycan.

The protein belongs to the herpesviridae BDLF2 family. In terms of assembly, interacts with BMRF2.

It localises to the virion membrane. In terms of biological role, rearranges cellular actin to increase intercellular contacts and thereby promote virus cell-to-cell spreading. Induce the outgrowth of long, branched plasma membrane fronds to create intercellular network for virion traffic. The fronds are actin based and RhoA-dependent. This is Protein BDLF2 from Homo sapiens (Human).